We begin with the raw amino-acid sequence, 216 residues long: Glycerol-3-phosphate acyltransferase (216 aa).

5 helical membrane-spanning segments follow: residues 5–25 (LIALAAAAGGYLFGSIPFGLV), 70–90 (IAAAVFGYFLGTTAGLVAGAF), 118–138 (VVFWPVGLTVIATWLAMAAIF), 140–160 (ISSLAALAAALAAPFAALAWG), and 164–184 (VAIMAGLLTVLIYWLHRANIS). The span at 192–201 (PRIGGKKSET) shows a compositional bias: basic and acidic residues. The tract at residues 192-216 (PRIGGKKSETSADVSDGDDPDTPAT) is disordered. Residues 206-216 (SDGDDPDTPAT) are compositionally biased toward acidic residues.

This sequence belongs to the PlsY family. In terms of assembly, probably interacts with PlsX.

Its subcellular location is the cell inner membrane. It carries out the reaction an acyl phosphate + sn-glycerol 3-phosphate = a 1-acyl-sn-glycero-3-phosphate + phosphate. It participates in lipid metabolism; phospholipid metabolism. In terms of biological role, catalyzes the transfer of an acyl group from acyl-phosphate (acyl-PO(4)) to glycerol-3-phosphate (G3P) to form lysophosphatidic acid (LPA). This enzyme utilizes acyl-phosphate as fatty acyl donor, but not acyl-CoA or acyl-ACP. This chain is Glycerol-3-phosphate acyltransferase, found in Maricaulis maris (strain MCS10) (Caulobacter maris).